The primary structure comprises 66 residues: Alpha-like toxin Bom3 (66 aa).

One can recognise an LCN-type CS-alpha/beta domain in the interval Arg-2–His-66. Disulfide bonds link Cys-12-Cys-65, Cys-16-Cys-37, Cys-23-Cys-47, and Cys-27-Cys-49.

This sequence belongs to the long (4 C-C) scorpion toxin superfamily. Sodium channel inhibitor family. Alpha subfamily. Expressed by the venom gland.

It localises to the secreted. Alpha toxins bind voltage-independently at site-3 of sodium channels (Nav) and inhibit the inactivation of the activated channels, thereby blocking neuronal transmission. As it competes neither with the classical alpha-toxin AaH2 nor the beta-toxin Css2, this toxin is an alpha-like toxin. The polypeptide is Alpha-like toxin Bom3 (Buthus occitanus mardochei (Moroccan scorpion)).